We begin with the raw amino-acid sequence, 308 residues long: Tetraacyldisaccharide 4'-kinase (308 aa).

Serine 63–threonine 70 serves as a coordination point for ATP.

Belongs to the LpxK family.

The enzyme catalyses a lipid A disaccharide + ATP = a lipid IVA + ADP + H(+). The protein operates within glycolipid biosynthesis; lipid IV(A) biosynthesis; lipid IV(A) from (3R)-3-hydroxytetradecanoyl-[acyl-carrier-protein] and UDP-N-acetyl-alpha-D-glucosamine: step 6/6. In terms of biological role, transfers the gamma-phosphate of ATP to the 4'-position of a tetraacyldisaccharide 1-phosphate intermediate (termed DS-1-P) to form tetraacyldisaccharide 1,4'-bis-phosphate (lipid IVA). The protein is Tetraacyldisaccharide 4'-kinase of Campylobacter jejuni subsp. jejuni serotype O:23/36 (strain 81-176).